The sequence spans 307 residues: Nicotinamide/nicotinic acid mononucleotide adenylyltransferase 2 (307 aa).

Positions 16 and 17 each coordinate NAD(+). Position 24 (H24) interacts with ATP. Positions 92 and 95 each coordinate NAD(+). 2 S-palmitoyl cysteine lipidation sites follow: C164 and C165. The NAD(+) site is built by G200, D202, L212, W213, and R232. 271–274 (TKSR) contacts ATP.

This sequence belongs to the eukaryotic NMN adenylyltransferase family. Monomer. Mg(2+) serves as cofactor. Degraded in response to injured neurite. Degradation is caused by polyubiquitination by MYCBP2 after recognition by FBXO45. In terms of processing, palmitoylated; palmitoylation is required for membrane association. As to expression, expressed predominantly in the brain and nervous system.

It is found in the golgi apparatus membrane. Its subcellular location is the cytoplasmic vesicle membrane. The protein localises to the cytoplasm. The protein resides in the cell projection. It localises to the axon. It catalyses the reaction beta-nicotinamide D-ribonucleotide + ATP + H(+) = diphosphate + NAD(+). The catalysed reaction is nicotinate beta-D-ribonucleotide + ATP + H(+) = deamido-NAD(+) + diphosphate. It functions in the pathway cofactor biosynthesis; NAD(+) biosynthesis; NAD(+) from nicotinamide D-ribonucleotide: step 1/1. Its pathway is cofactor biosynthesis; NAD(+) biosynthesis; deamido-NAD(+) from nicotinate D-ribonucleotide: step 1/1. Its activity is regulated as follows. Inhibited by P1-(adenosine-5')-P3-(nicotinamide-riboside-5')-triphosphate (Np3AD) and P1-(adenosine-5')-P4-(nicotinamide-riboside-5')-tetraphosphate (Np4AD). In terms of biological role, nicotinamide/nicotinate-nucleotide adenylyltransferase that acts as an axon maintenance factor. Axon survival factor required for the maintenance of healthy axons: acts by delaying Wallerian axon degeneration, an evolutionarily conserved process that drives the loss of damaged axons. Catalyzes the formation of NAD(+) from nicotinamide mononucleotide (NMN) and ATP. Can also use the deamidated form; nicotinic acid mononucleotide (NaMN) as substrate but with a lower efficiency. Cannot use triazofurin monophosphate (TrMP) as substrate. Also catalyzes the reverse reaction, i.e. the pyrophosphorolytic cleavage of NAD(+). For the pyrophosphorolytic activity prefers NAD(+), NADH and NaAD as substrates and degrades nicotinic acid adenine dinucleotide phosphate (NHD) less effectively. Fails to cleave phosphorylated dinucleotides NADP(+), NADPH and NaADP(+). Also acts as an activator of ADP-ribosylation by supporting the catalytic activity of PARP16 and promoting mono-ADP-ribosylation of ribosomes by PARP16. May be involved in the maintenance of axonal integrity. This is Nicotinamide/nicotinic acid mononucleotide adenylyltransferase 2 from Mus musculus (Mouse).